The sequence spans 457 residues: Succinate-semialdehyde dehydrogenase [NADP(+)] (457 aa).

NADP(+) contacts are provided by residues tryptophan 133–asparagine 134, lysine 157–serine 160, and glycine 209–serine 210. Glutamate 231 acts as the Proton acceptor in catalysis. Leucine 232 provides a ligand contact to NADP(+). Residue cysteine 265 is the Nucleophile of the active site. Glutamate 362 is an NADP(+) binding site.

This sequence belongs to the aldehyde dehydrogenase family.

It catalyses the reaction succinate semialdehyde + NADP(+) + H2O = succinate + NADPH + 2 H(+). Functionally, catalyzes the NADP(+)-dependent oxidation of succinate semialdehyde to succinate. It is believed to be the main source of succinate semialdehyde dehydrogenase activity in Mycobacterium. The chain is Succinate-semialdehyde dehydrogenase [NADP(+)] (gabD1) from Mycobacterium leprae (strain TN).